Consider the following 1286-residue polypeptide: Ankyrin-repeat and fibronectin type III domain-containing 1 (1286 aa).

ANK repeat units lie at residues Q274–L303 and E311–P340. The 97-residue stretch at V411–S507 folds into the Fibronectin type-III domain. The highly conserved peptide sequence stretch occupies residues G748–K755. The segment covering S999–S1011 has biased composition (polar residues). Disordered stretches follow at residues S999 to C1032, K1086 to H1106, A1187 to P1207, and A1242 to L1286. A compositionally biased stretch (low complexity) spans S1260–P1277.

Expressed in both the suprachiasmatic nucleus and dorsal medial hypothalamus.

May play a role in neuronal function. The protein is Ankyrin-repeat and fibronectin type III domain-containing 1 of Mus musculus (Mouse).